The sequence spans 864 residues: Xylosyltransferase 2 (864 aa).

The Cytoplasmic portion of the chain corresponds to 1-15 (MVASARVQKLVRRYK). Residues 16-36 (LAIATALAILLLQGLVVWSFS) traverse the membrane as a helical; Signal-anchor for type II membrane protein segment. Residues 37-864 (GLEEDEPGEK…GPVKADGRLR (828 aa)) lie on the Lumenal side of the membrane. 2 disordered regions span residues 39–123 (EEDE…RQNL) and 136–158 (AGFP…DNSF). Basic and acidic residues predominate over residues 53–65 (RPLDPGEGSKDTD). The span at 73–82 (SAGRRHGRWR) shows a compositional bias: basic residues. N122 carries an N-linked (GlcNAc...) asparagine glycan. Intrachain disulfides connect C162–C190, C206–C448, C467–C480, and C469–C478. UDP-alpha-D-xylose is bound by residues V239, D267, and 296-298 (TIW). Residue N327 is glycosylated (N-linked (GlcNAc...) asparagine). 400–401 (DW) contributes to the UDP-alpha-D-xylose binding site. UDP-alpha-D-xylose-binding positions include S481 and 504-505 (RK). 2 disulfides stabilise this stretch: C580/C832 and C825/C838. N682 carries N-linked (GlcNAc...) asparagine glycosylation.

This sequence belongs to the glycosyltransferase 14 family. XylT subfamily. In terms of assembly, monomer. Requires Mg(2+) as cofactor. Mn(2+) is required as a cofactor. In terms of processing, contains disulfide bonds.

Its subcellular location is the golgi apparatus membrane. The protein resides in the secreted. The catalysed reaction is UDP-alpha-D-xylose + L-seryl-[protein] = 3-O-(beta-D-xylosyl)-L-seryl-[protein] + UDP + H(+). Its pathway is glycan metabolism; chondroitin sulfate biosynthesis. It participates in glycan metabolism; heparan sulfate biosynthesis. Functionally, catalyzes the first step in the biosynthesis of chondroitin sulfate, heparan sulfate and dermatan sulfate proteoglycans, such as DCN. Transfers D-xylose from UDP-D-xylose to specific serine residues of the core protein. This is Xylosyltransferase 2 (Xylt2) from Rattus norvegicus (Rat).